The sequence spans 185 residues: Lysozyme g (185 aa).

Glutamine 1 carries the post-translational modification Pyrrolidone carboxylic acid. Cystine bridges form between cysteine 4–cysteine 60 and cysteine 18–cysteine 29. Catalysis depends on residues glutamate 73 and aspartate 86.

It belongs to the glycosyl hydrolase 23 family.

Its subcellular location is the secreted. The enzyme catalyses Hydrolysis of (1-&gt;4)-beta-linkages between N-acetylmuramic acid and N-acetyl-D-glucosamine residues in a peptidoglycan and between N-acetyl-D-glucosamine residues in chitodextrins.. In Casuarius casuarius (Southern cassowary), this protein is Lysozyme g.